The following is a 293-amino-acid chain: uncharacterized protein (293 aa).

Disordered stretches follow at residues 121-154 (NLNFDPHQMSKPSYHHHSHSHSHHSHSHSHSQNS) and 254-274 (DILQTVPPSPTPTPPPPPQQQ). Basic residues predominate over residues 133–149 (SYHHHSHSHSHHSHSHS). Positions 260–272 (PPSPTPTPPPPPQ) are enriched in pro residues.

This is an uncharacterized protein from Dictyostelium discoideum (Social amoeba).